Reading from the N-terminus, the 1253-residue chain is Myosin-1 (1253 aa).

Positions 1-40 (MGHSRRPVGGEKKSRGFGRSKAAADVGDGRQAGKPQVKKA) are disordered. The region spanning 50–729 (IGVSDLTLLS…TLFALEAMRD (680 aa)) is the Myosin motor domain. 143–150 (GESGAGKT) is a binding site for ATP. Ser-371 carries the post-translational modification Phosphoserine. The segment at 418 to 500 (SIGILDIYGF…PGVFAALNDA (83 aa)) is actin-binding. IQ domains are found at residues 733 to 753 (HNMA…RIEC) and 754 to 779 (ATRI…QGHQ). Residues 787-977 (RRRMSLLGSR…TIHTGAGEPA (191 aa)) enclose the TH1 domain. Disordered stretches follow at residues 959 to 1083 (TGDD…PKKP) and 1139 to 1253 (QVAP…DDDW). A compositionally biased stretch (low complexity) spans 1029–1055 (PQPAAAQPAAPQPAARVVPQPVAAVAA). 2 stretches are compositionally biased toward pro residues: residues 1068-1081 (APPP…PAPK) and 1143-1155 (APKP…PPAA). The region spanning 1080–1141 (PKKPTAKALY…PEAYLEEQVA (62 aa)) is the SH3 domain. 2 stretches are compositionally biased toward low complexity: residues 1156 to 1173 (PRST…AKAK) and 1221 to 1235 (NSAS…LAEA).

Belongs to the TRAFAC class myosin-kinesin ATPase superfamily. Myosin family. In terms of processing, phosphorylation of the TEDS site (Ser-371) is required for the polarization of the actin cytoskeleton. Phosphorylation probably activates the myosin-I ATPase activity.

It localises to the cytoplasm. The protein resides in the cytoskeleton. Its subcellular location is the actin patch. Its function is as follows. Type-I myosin implicated in the organization of the actin cytoskeleton. Required for proper actin cytoskeleton polarization. At the cell cortex, assembles in patch-like structures together with proteins from the actin-polymerizing machinery and promotes actin assembly. Functions as actin nucleation-promoting factor (NPF) for the Arp2/3 complex. Plays an important role in polarized growth, spore germination, hyphal morphogenesis, and septal wall formation. In Aspergillus clavatus (strain ATCC 1007 / CBS 513.65 / DSM 816 / NCTC 3887 / NRRL 1 / QM 1276 / 107), this protein is Myosin-1 (myoA).